Here is a 211-residue protein sequence, read N- to C-terminus: Pyridoxine/pyridoxamine 5'-phosphate oxidase (211 aa).

Substrate contacts are provided by residues 7–10 (RRDY) and lysine 65. FMN-binding positions include 60-65 (RIVLLK), 75-76 (YT), arginine 81, lysine 82, and glutamine 104. The substrate site is built by tyrosine 122, arginine 126, and serine 130. FMN is bound by residues 139 to 140 (QS) and tryptophan 184. Residue 190–192 (RLH) participates in substrate binding. Position 194 (arginine 194) interacts with FMN.

This sequence belongs to the pyridoxamine 5'-phosphate oxidase family. Homodimer. It depends on FMN as a cofactor.

It catalyses the reaction pyridoxamine 5'-phosphate + O2 + H2O = pyridoxal 5'-phosphate + H2O2 + NH4(+). The catalysed reaction is pyridoxine 5'-phosphate + O2 = pyridoxal 5'-phosphate + H2O2. Its pathway is cofactor metabolism; pyridoxal 5'-phosphate salvage; pyridoxal 5'-phosphate from pyridoxamine 5'-phosphate: step 1/1. It functions in the pathway cofactor metabolism; pyridoxal 5'-phosphate salvage; pyridoxal 5'-phosphate from pyridoxine 5'-phosphate: step 1/1. Functionally, catalyzes the oxidation of either pyridoxine 5'-phosphate (PNP) or pyridoxamine 5'-phosphate (PMP) into pyridoxal 5'-phosphate (PLP). The protein is Pyridoxine/pyridoxamine 5'-phosphate oxidase of Aliivibrio salmonicida (strain LFI1238) (Vibrio salmonicida (strain LFI1238)).